The primary structure comprises 429 residues: Serine carboxypeptidase-like (429 aa).

3 cysteine pairs are disulfide-bonded: C58–C298, C226–C241, and C264–C269. N-linked (GlcNAc...) asparagine glycosylation occurs at N76. Residue S148 is part of the active site. The active site involves D336. A substrate-binding site is contributed by C339. Residue H393 is part of the active site. 2 N-linked (GlcNAc...) asparagine glycosylation sites follow: N414 and N417.

Belongs to the peptidase S10 family. In terms of tissue distribution, abundant in germinated embryos composed of leaf, root, and scutellum.

This is Serine carboxypeptidase-like (CBP31) from Oryza sativa subsp. japonica (Rice).